We begin with the raw amino-acid sequence, 580 residues long: Zinc finger protein 271 (580 aa).

18 consecutive C2H2-type zinc fingers follow at residues 78 to 100 (YNCDECDQSFAWSTGLIRHQRTH), 104 to 126 (YECEECGKAFRMSSALVLHQRIH), 132 to 154 (YPCSWCIKSFSRSSDLIKHQRVH), 160 to 182 (YKCDECGKAFSQSSDLMIHQRIH), 188 to 210 (YQCSHCSKSFSQHSGMVKHLRIH), 216 to 238 (YMCNHCYKHFSQSSDLIKHQRIH), 244 to 266 (YKCDVCGKAFSQSSDRILHQRIH), 272 to 294 (YPCAQCNKSFSQNSDLIKHRRIH), 300 to 322 (YKCSECGKAFNQSSVLILHQRIH), 328 to 350 (YPCNQCTKSFSRLSDLINHQRIH), 356 to 378 (YPCSQCSKMFSRRSDLVKHYRIH), 384 to 406 (YECDKCGKTFSQSSNLILHQRIH), 412 to 434 (YPCNSCSKSFSRGSDLIKHQRVH), 440 to 462 (YTCNLCSKSFSQSSDLTKHQRVH), 468 to 490 (YHCSSCNKAFRQSSDLILHHRVH), 496 to 518 (YACTQCPRSFSQKSDLIKHQRIH), 524 to 545 (YKCMCGKAFSQCSAFTLHQRIH), and 551 to 573 (YPCAQCGKSFSQRSDLVNHQRVH).

The protein belongs to the krueppel C2H2-type zinc-finger protein family. In terms of tissue distribution, selectively expressed in adult testis.

It is found in the nucleus. In terms of biological role, may act to control gene activity during the pachytene stage of meiotic prophase. May function as a transcription activator. This Mus musculus (Mouse) protein is Zinc finger protein 271 (Znf271).